Consider the following 39-residue polypeptide: Omega-theraphotoxin-Asp1a (39 aa).

3 disulfides stabilise this stretch: C4-C25, C8-C31, and C17-C36.

In terms of tissue distribution, expressed by the venom gland.

Its subcellular location is the secreted. In terms of biological role, toxin that inhibits voltage-gated calcium channels in rat cerebellar granule cells (IC(50)&lt;200 nM). Is lethal to cockroaches. The sequence is that of Omega-theraphotoxin-Asp1a from Aphonopelma sp. (American tarantula).